The primary structure comprises 255 residues: 5'-nucleotidase SurE (255 aa).

A divalent metal cation-binding residues include aspartate 8, aspartate 9, serine 39, and asparagine 91.

This sequence belongs to the SurE nucleotidase family. A divalent metal cation serves as cofactor.

The protein localises to the cytoplasm. The catalysed reaction is a ribonucleoside 5'-phosphate + H2O = a ribonucleoside + phosphate. Functionally, nucleotidase that shows phosphatase activity on nucleoside 5'-monophosphates. The polypeptide is 5'-nucleotidase SurE (Acinetobacter baumannii (strain AB0057)).